An 801-amino-acid polypeptide reads, in one-letter code: Quinoprotein glucose dehydrogenase A (801 aa).

Positions 1–33 (MNQPTSRSGLTTFTVIIIGLLALFLLIGGIWLA) are cleaved as a signal peptide. 4 consecutive transmembrane segments (helical) span residues 39–55 (IYYI…AWQL), 59–79 (ASTA…WSVW), 94–108 (ILGI…PAVT), and 119–138 (VALS…SIFN). Asp-471 functions as the Proton acceptor in the catalytic mechanism.

This sequence belongs to the bacterial PQQ dehydrogenase family. Monomer. Requires pyrroloquinoline quinone as cofactor.

It localises to the cell inner membrane. It carries out the reaction D-glucose + A = D-glucono-1,5-lactone + AH2. Catalyzes an exceptionally high rate of oxidation of a wide range of aldose sugars, including D-glucose, galactose, arabinose and xylose, and also the disaccharides lactose, cellobiose and maltose. The protein is Quinoprotein glucose dehydrogenase A (gdhA) of Acinetobacter calcoaceticus.